Reading from the N-terminus, the 282-residue chain is NH(3)-dependent NAD(+) synthetase (282 aa).

Residue 51-58 coordinates ATP; it reads GISGGVDS. Position 57 (Asp-57) interacts with Mg(2+). Residue Arg-148 coordinates deamido-NAD(+). Thr-168 provides a ligand contact to ATP. Glu-173 serves as a coordination point for Mg(2+). Lys-181 and Asp-188 together coordinate deamido-NAD(+). Positions 197 and 219 each coordinate ATP. Deamido-NAD(+) is bound at residue 268–269; sequence HK.

Belongs to the NAD synthetase family. Homodimer.

It catalyses the reaction deamido-NAD(+) + NH4(+) + ATP = AMP + diphosphate + NAD(+) + H(+). Its pathway is cofactor biosynthesis; NAD(+) biosynthesis; NAD(+) from deamido-NAD(+) (ammonia route): step 1/1. Its function is as follows. Catalyzes the ATP-dependent amidation of deamido-NAD to form NAD. Uses ammonia as a nitrogen source. This chain is NH(3)-dependent NAD(+) synthetase, found in Burkholderia cenocepacia (strain ATCC BAA-245 / DSM 16553 / LMG 16656 / NCTC 13227 / J2315 / CF5610) (Burkholderia cepacia (strain J2315)).